A 138-amino-acid chain; its full sequence is ATP synthase epsilon chain 2 (138 aa).

Belongs to the ATPase epsilon chain family. F-type ATPases have 2 components, CF(1) - the catalytic core - and CF(0) - the membrane proton channel. CF(1) has five subunits: alpha(3), beta(3), gamma(1), delta(1), epsilon(1). CF(0) has three main subunits: a, b and c.

The protein resides in the cell inner membrane. Its function is as follows. Produces ATP from ADP in the presence of a proton gradient across the membrane. The protein is ATP synthase epsilon chain 2 of Syntrophotalea carbinolica (strain DSM 2380 / NBRC 103641 / GraBd1) (Pelobacter carbinolicus).